The chain runs to 172 residues: Auxin-responsive protein IAA30 (172 aa).

The segment covering 1 to 18 (MGRGRSSSSSSIESSCKS) has biased composition (low complexity). Residues 1–28 (MGRGRSSSSSSIESSCKSNPFGVSSSNT) are disordered. The short motif at 35–39 (LRLGL) is the EAR-like (transcriptional repression) element. The region spanning 82 to 171 (SFYVKVNMEG…RRLKISRAYH (90 aa)) is the PB1 domain.

The protein belongs to the Aux/IAA family. As to quaternary structure, homodimers and heterodimers.

It is found in the nucleus. Its function is as follows. Aux/IAA proteins are short-lived transcriptional factors that function as repressors of early auxin response genes at low auxin concentrations. Repression is thought to result from the interaction with auxin response factors (ARFs), proteins that bind to the auxin-responsive promoter element (AuxRE). Formation of heterodimers with ARF proteins may alter their ability to modulate early auxin response genes expression. The sequence is that of Auxin-responsive protein IAA30 (IAA30) from Arabidopsis thaliana (Mouse-ear cress).